The sequence spans 390 residues: Succinate--CoA ligase [ADP-forming] subunit beta (390 aa).

Residues 9 to 248 (KEILRRHKAN…ITEEDPLEVQ (240 aa)) form the ATP-grasp domain. Residues K50, 57-59 (GRG), E103, I106, and E111 each bind ATP. Mg(2+) is bound by residues N203 and D217. Substrate-binding positions include N268 and 325–327 (GIV).

Belongs to the succinate/malate CoA ligase beta subunit family. In terms of assembly, heterotetramer of two alpha and two beta subunits. Requires Mg(2+) as cofactor.

It carries out the reaction succinate + ATP + CoA = succinyl-CoA + ADP + phosphate. It catalyses the reaction GTP + succinate + CoA = succinyl-CoA + GDP + phosphate. The protein operates within carbohydrate metabolism; tricarboxylic acid cycle; succinate from succinyl-CoA (ligase route): step 1/1. Its function is as follows. Succinyl-CoA synthetase functions in the citric acid cycle (TCA), coupling the hydrolysis of succinyl-CoA to the synthesis of either ATP or GTP and thus represents the only step of substrate-level phosphorylation in the TCA. The beta subunit provides nucleotide specificity of the enzyme and binds the substrate succinate, while the binding sites for coenzyme A and phosphate are found in the alpha subunit. The sequence is that of Succinate--CoA ligase [ADP-forming] subunit beta from Leptospira interrogans serogroup Icterohaemorrhagiae serovar copenhageni (strain Fiocruz L1-130).